The chain runs to 311 residues: 4-diphosphocytidyl-2-C-methyl-D-erythritol kinase (311 aa).

Lys10 is a catalytic residue. 105–115 (PVAGGMAGGSA) provides a ligand contact to ATP. Asp146 is an active-site residue.

It belongs to the GHMP kinase family. IspE subfamily.

It catalyses the reaction 4-CDP-2-C-methyl-D-erythritol + ATP = 4-CDP-2-C-methyl-D-erythritol 2-phosphate + ADP + H(+). It functions in the pathway isoprenoid biosynthesis; isopentenyl diphosphate biosynthesis via DXP pathway; isopentenyl diphosphate from 1-deoxy-D-xylulose 5-phosphate: step 3/6. Functionally, catalyzes the phosphorylation of the position 2 hydroxy group of 4-diphosphocytidyl-2C-methyl-D-erythritol. The chain is 4-diphosphocytidyl-2-C-methyl-D-erythritol kinase from Corynebacterium glutamicum (strain ATCC 13032 / DSM 20300 / JCM 1318 / BCRC 11384 / CCUG 27702 / LMG 3730 / NBRC 12168 / NCIMB 10025 / NRRL B-2784 / 534).